The primary structure comprises 132 residues: Agouti-signaling protein (132 aa).

The signal sequence occupies residues 1 to 22; the sequence is MDVTRLLLATLLVFLCFFTAYS. The N-linked (GlcNAc...) asparagine glycan is linked to asparagine 39. A compositionally biased stretch (basic and acidic residues) spans 61–79; sequence EISRKEAEKKRSSKKEASM. A disordered region spans residues 61-87; that stretch reads EISRKEAEKKRSSKKEASMKKVARPRT. Intrachain disulfides connect cysteine 93–cysteine 108, cysteine 100–cysteine 114, cysteine 107–cysteine 125, cysteine 111–cysteine 132, and cysteine 116–cysteine 123. Positions 93 to 132 constitute an Agouti domain; it reads CVATRDSCKPPAPACCDPCASCQCRFFRSACSCRVLSLNC.

The protein resides in the secreted. Involved in the regulation of melanogenesis. The binding of ASP to MC1R precludes alpha-MSH initiated signaling and thus blocks production of cAMP, leading to a down-regulation of eumelanogenesis (brown/black pigment) and thus increasing synthesis of pheomelanin (yellow/red pigment). In Macaca fascicularis (Crab-eating macaque), this protein is Agouti-signaling protein (ASIP).